We begin with the raw amino-acid sequence, 502 residues long: Protein nucleotidyltransferase YdiU (502 aa).

Residues Gly98, Gly100, Arg101, Lys121, Asp133, Gly134, Arg184, and Arg191 each coordinate ATP. Asp260 acts as the Proton acceptor in catalysis. Mg(2+) is bound by residues Asn261 and Asp270. Asp270 provides a ligand contact to ATP.

It belongs to the SELO family. Mg(2+) is required as a cofactor. Requires Mn(2+) as cofactor.

The enzyme catalyses L-seryl-[protein] + ATP = 3-O-(5'-adenylyl)-L-seryl-[protein] + diphosphate. It catalyses the reaction L-threonyl-[protein] + ATP = 3-O-(5'-adenylyl)-L-threonyl-[protein] + diphosphate. It carries out the reaction L-tyrosyl-[protein] + ATP = O-(5'-adenylyl)-L-tyrosyl-[protein] + diphosphate. The catalysed reaction is L-histidyl-[protein] + UTP = N(tele)-(5'-uridylyl)-L-histidyl-[protein] + diphosphate. The enzyme catalyses L-seryl-[protein] + UTP = O-(5'-uridylyl)-L-seryl-[protein] + diphosphate. It catalyses the reaction L-tyrosyl-[protein] + UTP = O-(5'-uridylyl)-L-tyrosyl-[protein] + diphosphate. In terms of biological role, nucleotidyltransferase involved in the post-translational modification of proteins. It can catalyze the addition of adenosine monophosphate (AMP) or uridine monophosphate (UMP) to a protein, resulting in modifications known as AMPylation and UMPylation. This is Protein nucleotidyltransferase YdiU from Rhizobium rhizogenes (strain K84 / ATCC BAA-868) (Agrobacterium radiobacter).